The following is an 874-amino-acid chain: Alanine--tRNA ligase (874 aa).

Residues histidine 562, histidine 566, cysteine 665, and histidine 669 each contribute to the Zn(2+) site.

This sequence belongs to the class-II aminoacyl-tRNA synthetase family. It depends on Zn(2+) as a cofactor.

It localises to the cytoplasm. It carries out the reaction tRNA(Ala) + L-alanine + ATP = L-alanyl-tRNA(Ala) + AMP + diphosphate. Functionally, catalyzes the attachment of alanine to tRNA(Ala) in a two-step reaction: alanine is first activated by ATP to form Ala-AMP and then transferred to the acceptor end of tRNA(Ala). Also edits incorrectly charged Ser-tRNA(Ala) and Gly-tRNA(Ala) via its editing domain. This Pseudomonas fluorescens (strain ATCC BAA-477 / NRRL B-23932 / Pf-5) protein is Alanine--tRNA ligase.